Here is a 1055-residue protein sequence, read N- to C-terminus: Pre-mRNA-splicing factor ATP-dependent RNA helicase-like protein cdc28 (1055 aa).

Positions 67 to 78 (PREGSRPKENYN) are enriched in basic and acidic residues. The disordered stretch occupies residues 67–184 (PREGSRPKEN…TERLNDLRER (118 aa)). A compositionally biased stretch (basic residues) spans 112–121 (PLKKKSRSKT). A compositionally biased stretch (basic and acidic residues) spans 122–132 (PKREIARRQRD). Residues 133 to 145 (EDEWESDEYEEVV) are compositionally biased toward acidic residues. A compositionally biased stretch (basic and acidic residues) spans 163–184 (QNHDYEKSSDPETERLNDLRER). Residues 428–592 (LKAINEYQVL…FDEAPVFYVP (165 aa)) enclose the Helicase ATP-binding domain. 441–448 (AETGSGKT) contacts ATP. Residues 539–542 (DEAH) carry the DEAH box motif. Positions 617–790 (TILQIHTTQP…NIVLLLKSLG (174 aa)) constitute a Helicase C-terminal domain.

This sequence belongs to the DEAD box helicase family. DEAH subfamily. DDX16/PRP8 sub-subfamily.

The protein localises to the nucleus. It carries out the reaction ATP + H2O = ADP + phosphate + H(+). In terms of biological role, involved in pre-mRNA splicing. Is required together with ATP and at least one other factor, for the first cleavage-ligation reaction. Functions as a molecular motor in the activation of the precatalytic spliceosome for the first transesterification reaction of pre-mRNA splicing by hydrolyzing ATP to cause the activation of the spliceosome without the occurrence of splicing. This chain is Pre-mRNA-splicing factor ATP-dependent RNA helicase-like protein cdc28 (cdc28), found in Schizosaccharomyces pombe (strain 972 / ATCC 24843) (Fission yeast).